Here is a 214-residue protein sequence, read N- to C-terminus: Large ribosomal subunit protein bL25 (214 aa).

The tract at residues 193 to 214 (PRAAAEEEDTGAEGDVEAADAE) is disordered. Acidic residues predominate over residues 198–214 (EEEDTGAEGDVEAADAE).

Belongs to the bacterial ribosomal protein bL25 family. CTC subfamily. In terms of assembly, part of the 50S ribosomal subunit; part of the 5S rRNA/L5/L18/L25 subcomplex. Contacts the 5S rRNA. Binds to the 5S rRNA independently of L5 and L18.

This is one of the proteins that binds to the 5S RNA in the ribosome where it forms part of the central protuberance. The protein is Large ribosomal subunit protein bL25 of Nitrosococcus oceani (strain ATCC 19707 / BCRC 17464 / JCM 30415 / NCIMB 11848 / C-107).